The following is a 520-amino-acid chain: Glutamyl-tRNA(Gln) amidotransferase subunit A (520 aa).

Active-site charge relay system residues include K80 and S155. S179 (acyl-ester intermediate) is an active-site residue.

Belongs to the amidase family. GatA subfamily. In terms of assembly, heterotrimer of A, B and C subunits.

It catalyses the reaction L-glutamyl-tRNA(Gln) + L-glutamine + ATP + H2O = L-glutaminyl-tRNA(Gln) + L-glutamate + ADP + phosphate + H(+). Its function is as follows. Allows the formation of correctly charged Gln-tRNA(Gln) through the transamidation of misacylated Glu-tRNA(Gln) in organisms which lack glutaminyl-tRNA synthetase. The reaction takes place in the presence of glutamine and ATP through an activated gamma-phospho-Glu-tRNA(Gln). The protein is Glutamyl-tRNA(Gln) amidotransferase subunit A of Renibacterium salmoninarum (strain ATCC 33209 / DSM 20767 / JCM 11484 / NBRC 15589 / NCIMB 2235).